The primary structure comprises 164 residues: Respiratory growth induced protein 2 (164 aa).

It belongs to the RGI1 family.

The protein resides in the cytoplasm. Involved in the control of energetic metabolism and significantly contribute to cell fitness, especially under respiratory growth conditions. The chain is Respiratory growth induced protein 2 (RGI2) from Saccharomyces cerevisiae (strain RM11-1a) (Baker's yeast).